Here is a 440-residue protein sequence, read N- to C-terminus: Probable cytosolic iron-sulfur protein assembly protein 1 (440 aa).

WD repeat units lie at residues 12-51 (AHAE…SSDG), 71-110 (DHKR…SDDE), 148-187 (GHES…DFEC), 193-233 (EHSQ…WCIF), 278-317 (EEDE…PDSA), 326-379 (AHSR…SPSS), and 401-440 (HGVN…VVRD). Residues 107-116 (SDDEEEEDEG) are compositionally biased toward acidic residues. Residues 107–137 (SDDEEEEDEGAQGVYKPAGVDSDGDGDGGKE) form a disordered region.

Belongs to the WD repeat CIA1 family.

Essential component of the cytosolic iron-sulfur (Fe/S) protein assembly machinery. Required for the maturation of extramitochondrial Fe/S proteins. In Cryptococcus neoformans var. neoformans serotype D (strain B-3501A) (Filobasidiella neoformans), this protein is Probable cytosolic iron-sulfur protein assembly protein 1.